Reading from the N-terminus, the 92-residue chain is Small ribosomal subunit protein bS20 (92 aa).

A disordered region spans residues 1 to 23 (MANTPSAKKRAKQAEKRRSHNAS). Residues 7-20 (AKKRAKQAEKRRSH) are compositionally biased toward basic residues.

It belongs to the bacterial ribosomal protein bS20 family.

Binds directly to 16S ribosomal RNA. The sequence is that of Small ribosomal subunit protein bS20 from Pseudomonas savastanoi pv. phaseolicola (strain 1448A / Race 6) (Pseudomonas syringae pv. phaseolicola (strain 1448A / Race 6)).